Consider the following 393-residue polypeptide: 2-nitroimidazole transporter (393 aa).

At 1–12 (MTCSTSLSGKNR) the chain is on the cytoplasmic side. A helical transmembrane segment spans residues 13-33 (IVLIAGILMIATTLRVTFTGA). Over 34 to 52 (APLLDTIRSAYSLTTAQTG) the chain is Periplasmic. The helical transmembrane segment at 53–73 (LLTTLPLLAFALISPLAAPVA) threads the bilayer. Over 74–80 (RRFGMER) the chain is Cytoplasmic. The next 2 helical transmembrane spans lie at 81-101 (SLFAALLLICAGIAIRSLPSP) and 102-122 (YLLFGGTAVIGGGIALGNVLL). Over 123–140 (PGLIKRDFPHSVARLTGA) the chain is Cytoplasmic. The helical transmembrane segment at 141-161 (YSLTMGAAAALGSAMVVPLAL) threads the bilayer. The Periplasmic segment spans residues 162–163 (NG). A helical membrane pass occupies residues 164–184 (FGWQGALLMLMCFPLLALFLW). At 185 to 218 (LPQWRSQQHANLSTSRALHTRGIWRSPLAWQVTL) the chain is on the cytoplasmic side. The helical transmembrane segment at 219–239 (FLGINSLVYYVIIGWLPAILI) threads the bilayer. The Periplasmic portion of the chain corresponds to 240-249 (SHGYSEAQAG). Residues 250–270 (SLHGLLQLATAAPGLLIPLFL) traverse the membrane as a helical segment. Over 271-278 (HHVKDQRG) the chain is Cytoplasmic. The chain crosses the membrane as a helical span at residues 279-299 (IAAFVALMCAVGAVGLCFMPA). Topologically, residues 300–304 (HAITW) are periplasmic. The chain crosses the membrane as a helical span at residues 305–325 (TLLFGFGSGATMILGLTFIGL). The Cytoplasmic portion of the chain corresponds to 326 to 334 (RASSAHQAA). The helical transmembrane segment at 335-355 (ALSGMAQSVGYLLAACGPPLM) threads the bilayer. Topologically, residues 356-366 (GKIHDANGNWS) are periplasmic. Residues 367–387 (VPLMGVAILSLLMAIFGLCAG) form a helical membrane-spanning segment. Residues 388–393 (RDKEIR) are Cytoplasmic-facing.

Belongs to the major facilitator superfamily. Cyanate porter (TC 2.A.1.17) family.

Its subcellular location is the cell inner membrane. Involved in efflux of 2-nitroimidazole. In Escherichia coli (strain K12), this protein is 2-nitroimidazole transporter.